Reading from the N-terminus, the 288-residue chain is Phosphatidylserine decarboxylase proenzyme (288 aa).

Catalysis depends on charge relay system; for autoendoproteolytic cleavage activity residues Asp92, His149, and Ser254. The active-site Schiff-base intermediate with substrate; via pyruvic acid; for decarboxylase activity is the Ser254. Residue Ser254 is modified to Pyruvic acid (Ser); by autocatalysis.

This sequence belongs to the phosphatidylserine decarboxylase family. PSD-B subfamily. Prokaryotic type I sub-subfamily. As to quaternary structure, heterodimer of a large membrane-associated beta subunit and a small pyruvoyl-containing alpha subunit. Pyruvate is required as a cofactor. Post-translationally, is synthesized initially as an inactive proenzyme. Formation of the active enzyme involves a self-maturation process in which the active site pyruvoyl group is generated from an internal serine residue via an autocatalytic post-translational modification. Two non-identical subunits are generated from the proenzyme in this reaction, and the pyruvate is formed at the N-terminus of the alpha chain, which is derived from the carboxyl end of the proenzyme. The autoendoproteolytic cleavage occurs by a canonical serine protease mechanism, in which the side chain hydroxyl group of the serine supplies its oxygen atom to form the C-terminus of the beta chain, while the remainder of the serine residue undergoes an oxidative deamination to produce ammonia and the pyruvoyl prosthetic group on the alpha chain. During this reaction, the Ser that is part of the protease active site of the proenzyme becomes the pyruvoyl prosthetic group, which constitutes an essential element of the active site of the mature decarboxylase.

The protein localises to the cell membrane. It catalyses the reaction a 1,2-diacyl-sn-glycero-3-phospho-L-serine + H(+) = a 1,2-diacyl-sn-glycero-3-phosphoethanolamine + CO2. It participates in phospholipid metabolism; phosphatidylethanolamine biosynthesis; phosphatidylethanolamine from CDP-diacylglycerol: step 2/2. Its function is as follows. Catalyzes the formation of phosphatidylethanolamine (PtdEtn) from phosphatidylserine (PtdSer). The polypeptide is Phosphatidylserine decarboxylase proenzyme (Bordetella petrii (strain ATCC BAA-461 / DSM 12804 / CCUG 43448)).